A 34-amino-acid chain; its full sequence is WSTIVKLTICPTLKSMAKKCEGSIATMIKKKCDK.

A disulfide bond links cysteine 10 and cysteine 32.

It belongs to the ectatomin family. Ectatomin-Et subfamily. Heterodimer of an A and a B chain; disulfide-linked. As to expression, expressed by the venom gland.

It is found in the secreted. Its subcellular location is the target cell membrane. Functionally, algogenic for animals, human and insects. At high concentrations (0.5-1 uM), it acts as a pore-forming protein that forms nonselective cation channels both in cell and artificial membranes. It is weakly selective for cation over anions channel conductance is identical in both directions. At lower concentrations (1-10 nM), this heterodimer inhibits cardiac L-type calcium currents in isolated rat cardiac ventricular myocytes. The protein is Omega/M-ectatotoxin-Et1a subunit B of Ectatomma tuberculatum (Selva ant).